The primary structure comprises 144 residues: D-aminoacyl-tRNA deacylase (144 aa).

The Gly-cisPro motif, important for rejection of L-amino acids signature appears at 136 to 137 (GP).

It belongs to the DTD family. Homodimer.

Its subcellular location is the cytoplasm. It carries out the reaction glycyl-tRNA(Ala) + H2O = tRNA(Ala) + glycine + H(+). The catalysed reaction is a D-aminoacyl-tRNA + H2O = a tRNA + a D-alpha-amino acid + H(+). An aminoacyl-tRNA editing enzyme that deacylates mischarged D-aminoacyl-tRNAs. Also deacylates mischarged glycyl-tRNA(Ala), protecting cells against glycine mischarging by AlaRS. Acts via tRNA-based rather than protein-based catalysis; rejects L-amino acids rather than detecting D-amino acids in the active site. By recycling D-aminoacyl-tRNA to D-amino acids and free tRNA molecules, this enzyme counteracts the toxicity associated with the formation of D-aminoacyl-tRNA entities in vivo and helps enforce protein L-homochirality. In Haemophilus influenzae (strain PittEE), this protein is D-aminoacyl-tRNA deacylase.